The sequence spans 648 residues: Acyl-CoA-binding domain-containing protein 5 (648 aa).

The 95-residue stretch at 13 to 107 (YPERFYAAAS…LEEADPGWYP (95 aa)) folds into the ACB domain. An acyl-CoA is bound by residues lysine 34, 49 to 53 (YTLHQ), and lysine 75. Kelch repeat units follow at residues 196–244 (KMYM…KLTH), 256–306 (QLLS…LVGK), 307–357 (SLVI…VHAE), 359–408 (YLLI…TIGE), 409–457 (NWYI…LVVS), and 464–509 (IVVA…AVNN). Serine 517 is subject to Phosphoserine. Residues 520–632 (KVEGKADRII…AATMNAKRQS (113 aa)) are a coiled coil. Residues 625-634 (TMNAKRQSSG) are compositionally biased toward polar residues. A disordered region spans residues 625 to 648 (TMNAKRQSSGGVWGWLAGTPPPKT).

This sequence belongs to the ACBP family. In terms of tissue distribution, expressed in roots, stems, leaves, flowers and siliques.

It localises to the cytoplasm. Binds medium- and long-chain acyl-CoA esters with very high affinity. Can interact in vitro with oleoyl-CoA, barely with palmitoyl-CoA, but not with arachidonyl-CoA. May function as an intracellular carrier of acyl-CoA esters. The chain is Acyl-CoA-binding domain-containing protein 5 (ACBP5) from Arabidopsis thaliana (Mouse-ear cress).